The following is a 142-amino-acid chain: Hemoglobin subunit alpha (142 aa).

The Globin domain maps to 2 to 142 (VLSPADKTNV…VSTVLTSKYR (141 aa)). A Phosphoserine modification is found at Ser4. At Lys8 the chain carries N6-succinyllysine. Thr9 carries the post-translational modification Phosphothreonine. Lys12 carries the N6-succinyllysine modification. An N6-acetyllysine; alternate modification is found at Lys17. An N6-succinyllysine; alternate modification is found at Lys17. Phosphotyrosine is present on Tyr25. Ser36 is modified (phosphoserine). At Lys41 the chain carries N6-succinyllysine. Position 50 is a phosphoserine (Ser50). An O2-binding site is contributed by His59. His88 is a binding site for heme b. Ser103 is modified (phosphoserine). Thr109 is modified (phosphothreonine). Ser125 is subject to Phosphoserine. A phosphothreonine mark is found at Thr135 and Thr138. Ser139 is modified (phosphoserine).

It belongs to the globin family. Heterotetramer of two alpha chains and two beta chains. In terms of tissue distribution, red blood cells.

Functionally, involved in oxygen transport from the lung to the various peripheral tissues. Hemopressin acts as an antagonist peptide of the cannabinoid receptor CNR1. Hemopressin-binding efficiently blocks cannabinoid receptor CNR1 and subsequent signaling. The protein is Hemoglobin subunit alpha (HBA) of Ailurus fulgens (Himalayan red panda).